Consider the following 505-residue polypeptide: Trans-cinnamate 4-monooxygenase (505 aa).

Residues 3–23 (LLLIEKTLVALFAAIIGAILI) traverse the membrane as a helical segment. (E)-cinnamate is bound by residues 213–218 (RSRLAQ) and alanine 306. Cysteine 447 lines the heme pocket.

It belongs to the cytochrome P450 family. Requires heme as cofactor.

Its subcellular location is the membrane. The enzyme catalyses (E)-cinnamate + reduced [NADPH--hemoprotein reductase] + O2 = (E)-4-coumarate + oxidized [NADPH--hemoprotein reductase] + H2O + H(+). Its pathway is phenylpropanoid metabolism; trans-4-coumarate biosynthesis; trans-4-coumarate from trans-cinnamate: step 1/1. Its activity is regulated as follows. Inactivated by piperonylic acid. Functionally, catalyzes the first oxidative step of the phenylpropanoid pathway in higher plants by transforming trans-cinnamate into p-coumarate. The compounds formed by this pathway are essential components for lignification, pollination, and defense against ultraviolet light, predators and pathogens. Can also use 2-naphthoic acid as substrate. This Helianthus tuberosus (Jerusalem artichoke) protein is Trans-cinnamate 4-monooxygenase.